A 157-amino-acid polypeptide reads, in one-letter code: Cyclic pyranopterin monophosphate synthase (157 aa).

Substrate-binding positions include 74–76 (MCH) and 112–113 (ME). Asp127 is a catalytic residue.

It belongs to the MoaC family. In terms of assembly, homohexamer; trimer of dimers.

The catalysed reaction is (8S)-3',8-cyclo-7,8-dihydroguanosine 5'-triphosphate = cyclic pyranopterin phosphate + diphosphate. Its pathway is cofactor biosynthesis; molybdopterin biosynthesis. Functionally, catalyzes the conversion of (8S)-3',8-cyclo-7,8-dihydroguanosine 5'-triphosphate to cyclic pyranopterin monophosphate (cPMP). In Campylobacter jejuni subsp. jejuni serotype O:23/36 (strain 81-176), this protein is Cyclic pyranopterin monophosphate synthase.